Here is a 226-residue protein sequence, read N- to C-terminus: Oxaloacetate tautomerase FAHD2, mitochondrial (226 aa).

A mitochondrion-targeting transit peptide spans 1-30; sequence MAAAAQRLLAASTKIVGVGRNFVAHAKELG. Residues E69, E71, and D100 each coordinate Mg(2+).

This sequence belongs to the FAH family. Mg(2+) is required as a cofactor. It depends on Mn(2+) as a cofactor.

It is found in the mitochondrion. It carries out the reaction oxaloacetate = enol-oxaloacetate. In terms of biological role, tautomerase that converts enol-oxaloacetate, a strong inhibitor of succinate dehydrogenase, to the physiological keto form of oxaloacetate. This is Oxaloacetate tautomerase FAHD2, mitochondrial from Oryza sativa subsp. japonica (Rice).